The sequence spans 299 residues: ATP phosphoribosyltransferase (299 aa).

The protein belongs to the ATP phosphoribosyltransferase family. Long subfamily. Equilibrium between an active dimeric form, an inactive hexameric form and higher aggregates. Interconversion between the various forms is largely reversible and is influenced by the natural substrates and inhibitors of the enzyme. Mg(2+) is required as a cofactor.

Its subcellular location is the cytoplasm. The enzyme catalyses 1-(5-phospho-beta-D-ribosyl)-ATP + diphosphate = 5-phospho-alpha-D-ribose 1-diphosphate + ATP. It functions in the pathway amino-acid biosynthesis; L-histidine biosynthesis; L-histidine from 5-phospho-alpha-D-ribose 1-diphosphate: step 1/9. Its activity is regulated as follows. Feedback inhibited by histidine. Catalyzes the condensation of ATP and 5-phosphoribose 1-diphosphate to form N'-(5'-phosphoribosyl)-ATP (PR-ATP). Has a crucial role in the pathway because the rate of histidine biosynthesis seems to be controlled primarily by regulation of HisG enzymatic activity. The sequence is that of ATP phosphoribosyltransferase from Escherichia coli O157:H7.